The chain runs to 483 residues: Argininosuccinate lyase (483 aa).

This sequence belongs to the lyase 1 family. Argininosuccinate lyase subfamily.

Its subcellular location is the cytoplasm. The catalysed reaction is 2-(N(omega)-L-arginino)succinate = fumarate + L-arginine. It functions in the pathway amino-acid biosynthesis; L-arginine biosynthesis; L-arginine from L-ornithine and carbamoyl phosphate: step 3/3. The chain is Argininosuccinate lyase from Albidiferax ferrireducens (strain ATCC BAA-621 / DSM 15236 / T118) (Rhodoferax ferrireducens).